A 217-amino-acid polypeptide reads, in one-letter code: Probable transaldolase (217 aa).

The active-site Schiff-base intermediate with substrate is the Lys83.

Belongs to the transaldolase family. Type 3B subfamily.

The protein resides in the cytoplasm. The catalysed reaction is D-sedoheptulose 7-phosphate + D-glyceraldehyde 3-phosphate = D-erythrose 4-phosphate + beta-D-fructose 6-phosphate. Its pathway is carbohydrate degradation; pentose phosphate pathway; D-glyceraldehyde 3-phosphate and beta-D-fructose 6-phosphate from D-ribose 5-phosphate and D-xylulose 5-phosphate (non-oxidative stage): step 2/3. Transaldolase is important for the balance of metabolites in the pentose-phosphate pathway. The sequence is that of Probable transaldolase from Phenylobacterium zucineum (strain HLK1).